The sequence spans 261 residues: 6-carboxyhexanoate--CoA ligase (261 aa).

Belongs to the BioW family. Homodimer. Mg(2+) serves as cofactor.

It catalyses the reaction heptanedioate + ATP + CoA = 6-carboxyhexanoyl-CoA + AMP + diphosphate. It participates in metabolic intermediate metabolism; pimeloyl-CoA biosynthesis; pimeloyl-CoA from pimelate: step 1/1. Catalyzes the transformation of pimelate into pimeloyl-CoA with concomitant hydrolysis of ATP to AMP. This chain is 6-carboxyhexanoate--CoA ligase, found in Bacillus licheniformis (strain ATCC 14580 / DSM 13 / JCM 2505 / CCUG 7422 / NBRC 12200 / NCIMB 9375 / NCTC 10341 / NRRL NRS-1264 / Gibson 46).